The chain runs to 270 residues: Hemin import ATP-binding protein HmuV (270 aa).

One can recognise an ABC transporter domain in the interval 5–242 (LEAEAATYSV…SLINRVFDIE (238 aa)). 37–44 (GPNGAGKS) is an ATP binding site.

It belongs to the ABC transporter superfamily. Heme (hemin) importer (TC 3.A.1.14.5) family. The complex is composed of two ATP-binding proteins (HmuV), two transmembrane proteins (HmuU) and a solute-binding protein (HmuT).

Its subcellular location is the cell inner membrane. In terms of biological role, part of the ABC transporter complex HmuTUV involved in hemin import. Responsible for energy coupling to the transport system. This chain is Hemin import ATP-binding protein HmuV, found in Rhodopseudomonas palustris (strain BisA53).